The chain runs to 228 residues: Carboxy-S-adenosyl-L-methionine synthase (228 aa).

Residues Tyr30, Gly55–Ser57, Asp79–Asn80, and Asp103–Val104 contribute to the S-adenosyl-L-methionine site.

It belongs to the class I-like SAM-binding methyltransferase superfamily. Cx-SAM synthase family.

The catalysed reaction is prephenate + S-adenosyl-L-methionine = carboxy-S-adenosyl-L-methionine + 3-phenylpyruvate + H2O. Catalyzes the conversion of S-adenosyl-L-methionine (SAM) to carboxy-S-adenosyl-L-methionine (Cx-SAM). The sequence is that of Carboxy-S-adenosyl-L-methionine synthase from Staphylococcus epidermidis (strain ATCC 35984 / DSM 28319 / BCRC 17069 / CCUG 31568 / BM 3577 / RP62A).